A 216-amino-acid polypeptide reads, in one-letter code: Probable GTP-binding protein EngB (216 aa).

The region spanning 37-214 (GSVEIAFAGR…RAAMIRLLDE (178 aa)) is the EngB-type G domain. Residues 45 to 52 (GRSNVGKS), 72 to 76 (GRTQE), 92 to 95 (DMPG), 159 to 162 (TKAD), and 193 to 195 (TSS) each bind GTP. Mg(2+) is bound by residues S52 and T74.

Belongs to the TRAFAC class TrmE-Era-EngA-EngB-Septin-like GTPase superfamily. EngB GTPase family. It depends on Mg(2+) as a cofactor.

Functionally, necessary for normal cell division and for the maintenance of normal septation. The chain is Probable GTP-binding protein EngB from Rhodopseudomonas palustris (strain TIE-1).